The following is a 305-amino-acid chain: Insulin-like growth factor-binding protein 2 (305 aa).

An N-terminal signal peptide occupies residues 1 to 34 (MLPRLGGPALPLLLPSLLLLLLLGAGGCGPGVRA). In terms of domain architecture, IGFBP N-terminal spans 36–118 (VLFRCPPCTP…VTGAGTCEKR (83 aa)). Intrachain disulfides connect Cys40-Cys68, Cys43-Cys70, Cys51-Cys71, Cys59-Cys74, Cys82-Cys95, Cys89-Cys115, Cys207-Cys241, Cys252-Cys263, and Cys265-Cys286. A Thyroglobulin type-1 domain is found at 204–286 (RTPCQQELDQ…APTIRGDPEC (83 aa)). The Cell attachment site motif lies at 281–283 (RGD).

Interacts with IGF1. Interacts with IGF2. Interacts (via RGD motif) with integrin alpha5/ITGA5; this interaction induces cell migration, adhesion or apoptosis according to the context. Interacts with PTPRB; this interaction leads to PTPRB dimerization and inactivation. In terms of processing, cleaved by MMP9 leading to release of free IGF2 from IGFBP2-IGF2 complex, which contributes to enhance the motility and the growth of astrocytes. Post-translationally, O-glycosylated. Highly expressed in adult liver, but also in kidney, lung, brain, spleen, testis and ovary.

It localises to the secreted. Functionally, multifunctional protein that plays a critical role in regulating the availability of IGFs such as IGF1 and IGF2 to their receptors and thereby regulates IGF-mediated cellular processes including proliferation, differentiation, and apoptosis in a cell-type specific manner. Functions coordinately with receptor protein tyrosine phosphatase beta/PTPRB and the IGF1 receptor to regulate IGF1-mediated signaling by stimulating the phosphorylation of PTEN leading to its inactivation and AKT1 activation. Plays a positive role in cell migration via interaction with integrin alpha5/ITGA5 through an RGD motif. Additionally, interaction with ITGA5/ITGB1 enhances the adhesion of endothelial progenitor cells to endothelial cells. Upon mitochondrial damage, facilitates apoptosis with ITGA5 of podocytes, and then activates the phosphorylation of focal adhesion kinase (FAK)-mediated mitochondrial injury. This Mus musculus (Mouse) protein is Insulin-like growth factor-binding protein 2 (Igfbp2).